Reading from the N-terminus, the 379-residue chain is uncharacterized protein (379 aa).

A helical membrane pass occupies residues 9-26 (YFQLITTIFLISSITIAA).

It to A.liquefaciens L-sorbosone dehydrogenase.

Its subcellular location is the membrane. This is an uncharacterized protein from Borreliella burgdorferi (strain ATCC 35210 / DSM 4680 / CIP 102532 / B31) (Borrelia burgdorferi).